Consider the following 929-residue polypeptide: Synaptopodin (929 aa).

Residue methionine 1 is modified to N-acetylmethionine. The span at 1–12 shows a compositional bias: pro residues; sequence MLGPHLPPPPLA. A disordered region spans residues 1–260; that stretch reads MLGPHLPPPP…EASLLRHLEK (260 aa). 2 stretches are compositionally biased toward basic and acidic residues: residues 60-69 and 91-110; these read GVSRSGDDSA and SREE…DWDV. Serine 140 is modified (phosphoserine). Positions 142-151 are enriched in basic and acidic residues; that stretch reads TEKDLKEAKA. Polar residues predominate over residues 152–170; the sequence is RSQQIAAQLTTPPSSNSRG. Serine 207 carries the phosphoserine modification. Pro residues predominate over residues 224–234; sequence EPGPPRHPSPQ. Serine 263 carries the post-translational modification Phosphoserine. Positions 285-389 are disordered; it reads GLHLSQNREA…TLCADGQPQA (105 aa). The segment covering 317–332 has biased composition (low complexity); it reads LASPSATLTTPTSNSS. N-linked (GlcNAc...) asparagine glycosylation occurs at asparagine 330. Residues 333 to 379 are compositionally biased toward polar residues; it reads HNPPATDVNQNPPATVVPQSLPLSSIQQNSSEAQLPSNGTGPASKPS. 2 positions are modified to phosphoserine: serine 501 and serine 525. Residues 509-558 are disordered; sequence FGEKAPAPQPPSLPDRSPRPQRHIMSRSPMVERRMMGQRSPASERRPLGN. Threonine 560 carries the post-translational modification Phosphothreonine. The short motif at 562 to 565 is the PPxY motif element; sequence PPTY. At serine 580 the chain carries Phosphoserine. Positions 581–584 match the PPxY motif motif; the sequence is PPSY. Disordered stretches follow at residues 589–610 and 630–726; these read PSSD…KTGI and KPKV…KGAE. The segment covering 646–656 has biased composition (basic and acidic residues); that stretch reads ADEKRRQRDQG. Serine 685, serine 702, and tyrosine 738 each carry phosphoserine. Positions 685 to 698 are enriched in low complexity; that stretch reads SPAAAEEVVPEWAS. The tract at residues 740 to 763 is disordered; sequence IESSSHTPELARCPSPTMSLPSSW. Threonine 746 bears the Phosphothreonine mark. 3 positions are modified to phosphoserine: serine 754, serine 758, and serine 779. The residue at position 783 (threonine 783) is a Phosphothreonine. 8 positions are modified to phosphoserine: proline 784, threonine 804, arginine 812, lysine 826, serine 833, serine 854, proline 871, and proline 894. A compositionally biased stretch (low complexity) spans 826–839; it reads KVSPRAASPAKPSS. The tract at residues 826-916 is disordered; sequence KVSPRAASPA…RPSFSTRNAG (91 aa). Positions 866-880 are enriched in polar residues; that stretch reads GLYTSPGQDSLQPTA.

This sequence belongs to the synaptopodin family. Interacts with BAIAP1. Interacts with actin. Interacts (via PPxY motifs) with WWC1 (via WW domains). In terms of processing, O-glycosylated. In terms of tissue distribution, expressed in cerebral cortex.

It localises to the cytoplasm. Its subcellular location is the cytoskeleton. The protein resides in the cell junction. The protein localises to the tight junction. It is found in the perikaryon. It localises to the cell projection. Its subcellular location is the dendritic spine. The protein resides in the postsynaptic density. The protein localises to the synapse. It is found in the cytosol. Its function is as follows. Actin-associated protein that may play a role in modulating actin-based shape and motility of dendritic spines and renal podocyte foot processes. Seems to be essential for the formation of spine apparatuses in spines of telencephalic neurons, which is involved in synaptic plasticity. The protein is Synaptopodin (SYNPO) of Homo sapiens (Human).